A 72-amino-acid polypeptide reads, in one-letter code: Large ribosomal subunit protein bL28 (72 aa).

It belongs to the bacterial ribosomal protein bL28 family.

This Chlorobium limicola (strain DSM 245 / NBRC 103803 / 6330) protein is Large ribosomal subunit protein bL28.